Consider the following 163-residue polypeptide: Putative pre-16S rRNA nuclease (163 aa).

It belongs to the YqgF nuclease family.

It is found in the cytoplasm. Its function is as follows. Could be a nuclease involved in processing of the 5'-end of pre-16S rRNA. The protein is Putative pre-16S rRNA nuclease of Nitrobacter winogradskyi (strain ATCC 25391 / DSM 10237 / CIP 104748 / NCIMB 11846 / Nb-255).